We begin with the raw amino-acid sequence, 336 residues long: Acetyl-coenzyme A carboxylase carboxyl transferase subunit beta (336 aa).

The CoA carboxyltransferase N-terminal domain occupies 27–297; the sequence is LWTKCESCQG…VAPAPAPAAT (271 aa). Zn(2+) contacts are provided by Cys31, Cys34, Cys50, and Cys53. The segment at 31–53 adopts a C4-type zinc-finger fold; the sequence is CESCQGILYRPDLERNLEVCPKC. Positions 287-336 are disordered; it reads SVAPAPAPAATVDPEPESAEPEAPAEEAGPAGAAGDQAGESQDEGDPRNA. The segment covering 300–311 has biased composition (acidic residues); sequence PEPESAEPEAPA. Low complexity predominate over residues 312–326; sequence EEAGPAGAAGDQAGE.

This sequence belongs to the AccD/PCCB family. As to quaternary structure, acetyl-CoA carboxylase is a heterohexamer composed of biotin carboxyl carrier protein (AccB), biotin carboxylase (AccC) and two subunits each of ACCase subunit alpha (AccA) and ACCase subunit beta (AccD). The cofactor is Zn(2+).

The protein resides in the cytoplasm. The catalysed reaction is N(6)-carboxybiotinyl-L-lysyl-[protein] + acetyl-CoA = N(6)-biotinyl-L-lysyl-[protein] + malonyl-CoA. It functions in the pathway lipid metabolism; malonyl-CoA biosynthesis; malonyl-CoA from acetyl-CoA: step 1/1. Functionally, component of the acetyl coenzyme A carboxylase (ACC) complex. Biotin carboxylase (BC) catalyzes the carboxylation of biotin on its carrier protein (BCCP) and then the CO(2) group is transferred by the transcarboxylase to acetyl-CoA to form malonyl-CoA. This Halorhodospira halophila (strain DSM 244 / SL1) (Ectothiorhodospira halophila (strain DSM 244 / SL1)) protein is Acetyl-coenzyme A carboxylase carboxyl transferase subunit beta.